The primary structure comprises 182 residues: Ribosome-recycling factor (182 aa).

Belongs to the RRF family.

The protein resides in the cytoplasm. In terms of biological role, responsible for the release of ribosomes from messenger RNA at the termination of protein biosynthesis. May increase the efficiency of translation by recycling ribosomes from one round of translation to another. This chain is Ribosome-recycling factor, found in Parasynechococcus marenigrum (strain WH8102).